A 283-amino-acid chain; its full sequence is Thymidylate synthase (283 aa).

Residues arginine 31 and 145–146 contribute to the dUMP site; that span reads RR. The Nucleophile role is filled by cysteine 165. Residues 185–188, asparagine 196, and 226–228 each bind dUMP; these read RSAD and HIY. Position 188 (aspartate 188) interacts with (6R)-5,10-methylene-5,6,7,8-tetrahydrofolate. Serine 282 provides a ligand contact to (6R)-5,10-methylene-5,6,7,8-tetrahydrofolate.

The protein belongs to the thymidylate synthase family. Bacterial-type ThyA subfamily. As to quaternary structure, homodimer.

The protein resides in the cytoplasm. The catalysed reaction is dUMP + (6R)-5,10-methylene-5,6,7,8-tetrahydrofolate = 7,8-dihydrofolate + dTMP. Its pathway is pyrimidine metabolism; dTTP biosynthesis. Catalyzes the reductive methylation of 2'-deoxyuridine-5'-monophosphate (dUMP) to 2'-deoxythymidine-5'-monophosphate (dTMP) while utilizing 5,10-methylenetetrahydrofolate (mTHF) as the methyl donor and reductant in the reaction, yielding dihydrofolate (DHF) as a by-product. This enzymatic reaction provides an intracellular de novo source of dTMP, an essential precursor for DNA biosynthesis. The protein is Thymidylate synthase of Symbiobacterium thermophilum (strain DSM 24528 / JCM 14929 / IAM 14863 / T).